Consider the following 659-residue polypeptide: Mannosyl-oligosaccharide 1,2-alpha-mannosidase IA (659 aa).

Topologically, residues 1–48 (MPVGGLLPLFSSPAGGGLGGGLGGGLGGGGGGGGRKGSGPSAFRLTEK) are cytoplasmic. A helical; Signal-anchor for type II membrane protein membrane pass occupies residues 49–69 (FVLLLVFSAFITLCFGAIFFL). The Lumenal portion of the chain corresponds to 70-659 (PDSSKLLSGV…NIKKVEDNEK (590 aa)). Positions 88 to 121 (QPAADHKPGPGARAEDAADGRARPGEEGAPGDPA) are disordered. Over residues 91-113 (ADHKPGPGARAEDAADGRARPGE) the composition is skewed to basic and acidic residues. A disulfide bridge connects residues Cys-482 and Cys-514. Residue Glu-528 is the Proton donor of the active site. Residue Thr-639 participates in Ca(2+) binding.

This sequence belongs to the glycosyl hydrolase 47 family. Ca(2+) is required as a cofactor.

It localises to the endoplasmic reticulum membrane. It catalyses the reaction N(4)-(alpha-D-Man-(1-&gt;2)-alpha-D-Man-(1-&gt;2)-alpha-D-Man-(1-&gt;3)-[alpha-D-Man-(1-&gt;2)-alpha-D-Man-(1-&gt;3)-[alpha-D-Man-(1-&gt;2)-alpha-D-Man-(1-&gt;6)]-alpha-D-Man-(1-&gt;6)]-beta-D-Man-(1-&gt;4)-beta-D-GlcNAc-(1-&gt;4)-beta-D-GlcNAc)-L-asparaginyl-[protein] (N-glucan mannose isomer 9A1,2,3B1,2,3) + 4 H2O = N(4)-(alpha-D-Man-(1-&gt;3)-[alpha-D-Man-(1-&gt;3)-[alpha-D-Man-(1-&gt;6)]-alpha-D-Man-(1-&gt;6)]-beta-D-Man-(1-&gt;4)-beta-D-GlcNAc-(1-&gt;4)-beta-D-GlcNAc)-L-asparaginyl-[protein] (N-glucan mannose isomer 5A1,2) + 4 beta-D-mannose. The enzyme catalyses N(4)-(alpha-D-Man-(1-&gt;2)-alpha-D-Man-(1-&gt;2)-alpha-D-Man-(1-&gt;3)-[alpha-D-Man-(1-&gt;3)-[alpha-D-Man-(1-&gt;2)-alpha-D-Man-(1-&gt;6)]-alpha-D-Man-(1-&gt;6)]-beta-D-Man-(1-&gt;4)-beta-D-GlcNAc-(1-&gt;4)-beta-D-GlcNAc)-L-asparaginyl-[protein] (N-glucan mannose isomer 8A1,2,3B1,3) + 3 H2O = N(4)-(alpha-D-Man-(1-&gt;3)-[alpha-D-Man-(1-&gt;3)-[alpha-D-Man-(1-&gt;6)]-alpha-D-Man-(1-&gt;6)]-beta-D-Man-(1-&gt;4)-beta-D-GlcNAc-(1-&gt;4)-beta-D-GlcNAc)-L-asparaginyl-[protein] (N-glucan mannose isomer 5A1,2) + 3 beta-D-mannose. The protein operates within protein modification; protein glycosylation. Inhibited by both 1-deoxymannojirimycin and kifunensine. Its function is as follows. Involved in the maturation of Asn-linked oligosaccharides. Progressively trim alpha-1,2-linked mannose residues from Man(9)GlcNAc(2) to produce Man(5)GlcNAc(2). This Sus scrofa (Pig) protein is Mannosyl-oligosaccharide 1,2-alpha-mannosidase IA (MAN1A1).